A 610-amino-acid polypeptide reads, in one-letter code: Aspartate--tRNA(Asp/Asn) ligase (610 aa).

Glu-177 contacts L-aspartate. Residues Gln-201–Lys-204 form an aspartate region. An L-aspartate-binding site is contributed by Arg-223. ATP contacts are provided by residues Arg-223–Glu-225 and Gln-232. His-461 provides a ligand contact to L-aspartate. Position 499 (Glu-499) interacts with ATP. Position 506 (Arg-506) interacts with L-aspartate. Gly-551–Arg-554 serves as a coordination point for ATP.

The protein belongs to the class-II aminoacyl-tRNA synthetase family. Type 1 subfamily. In terms of assembly, homodimer.

The protein localises to the cytoplasm. It carries out the reaction tRNA(Asx) + L-aspartate + ATP = L-aspartyl-tRNA(Asx) + AMP + diphosphate. Functionally, aspartyl-tRNA synthetase with relaxed tRNA specificity since it is able to aspartylate not only its cognate tRNA(Asp) but also tRNA(Asn). Reaction proceeds in two steps: L-aspartate is first activated by ATP to form Asp-AMP and then transferred to the acceptor end of tRNA(Asp/Asn). The chain is Aspartate--tRNA(Asp/Asn) ligase from Parasynechococcus marenigrum (strain WH8102).